The chain runs to 143 residues: Transcriptional regulator SlyA (143 aa).

Residues 2 to 135 enclose the HTH marR-type domain; that stretch reads ESTLGSDLAR…LSGLIDKLEK (134 aa). Positions 49–72 form a DNA-binding region, H-T-H motif; it reads QIQLAKAIGIEQPSLVRTLDQLEE.

The protein belongs to the SlyA family. As to quaternary structure, homodimer.

Functionally, transcription regulator that can specifically activate or repress expression of target genes. The chain is Transcriptional regulator SlyA from Yersinia pestis bv. Antiqua (strain Antiqua).